Here is a 365-residue protein sequence, read N- to C-terminus: Outer membrane lipoprotein A (365 aa).

Positions 1-19 (MNIATKLMASLVASVVLTA) are cleaved as a signal peptide. The disordered stretch occupies residues 19-121 (ACSGGGSSGS…KGEELSKDKS (103 aa)). Cys20 carries N-palmitoyl cysteine lipidation. The S-diacylglycerol cysteine moiety is linked to residue Cys20. Composition is skewed to basic and acidic residues over residues 48-68 (EQPK…EPKE) and 105-121 (NPQK…KDKS).

It localises to the cell outer membrane. The chain is Outer membrane lipoprotein A (omlA) from Actinobacillus pleuropneumoniae (Haemophilus pleuropneumoniae).